The sequence spans 834 residues: Transcription intermediary factor 1-beta (834 aa).

Alanine 2 carries the N-acetylalanine modification. Residues 13–23 (AATAASAASGS) show a composition bias toward low complexity. Residues 13-56 (AATAASAASGSPGSGEGSAGGEKRPAASSAAAASAAASSPAGGG) are disordered. Residues serine 23, serine 26, and serine 30 each carry the phosphoserine modification. A Glycyl lysine isopeptide (Lys-Gly) (interchain with G-Cter in SUMO2) cross-link involves residue lysine 35. Residues 38–52 (AASSAAAASAAASSP) are compositionally biased toward low complexity. The residue at position 51 (serine 51) is a Phosphoserine. An RING-type zinc finger spans residues 66-122 (CGVCRERLRPERDPRLLPCLHSACSACLGPATPAAANNSGDGGSAGDGAMVDCPVCK). Lysine 128 is covalently cross-linked (Glycyl lysine isopeptide (Lys-Gly) (interchain with G-Cter in SUMO2)). Serine 139 is subject to Phosphoserine. The segment at 149 to 196 (DANQCCTSCEDNAPATSYCVECSEPLCETCVEAHQRVKYTKDHTVRST) adopts a B box-type 1 zinc-finger fold. Positions 154, 157, 178, and 182 each coordinate Zn(2+). Lysine 200 participates in a covalent cross-link: Glycyl lysine isopeptide (Lys-Gly) (interchain with G-Cter in SUMO2). A B box-type 2 zinc finger spans residues 205 to 246 (ERTVYCNVHKHEPLVLFCESCDTLTCRDCQLNAHKDHQYQFL). 4 residues coordinate Zn(2+): cysteine 210, histidine 213, cysteine 233, and histidine 238. The interval 247-377 (EDAVRNQRKL…LIYFQLHRAL (131 aa)) is leucine zipper alpha helical coiled-coil region. The tract at residues 248–377 (DAVRNQRKLL…LIYFQLHRAL (130 aa)) is interaction with MAGEC2. Glycyl lysine isopeptide (Lys-Gly) (interchain with G-Cter in SUMO2) cross-links involve residues lysine 255 and lysine 262. An N6-acetyllysine modification is found at lysine 267. A Glycyl lysine isopeptide (Lys-Gly) (interchain with G-Cter in SUMO2) cross-link involves residue lysine 273. At lysine 305 the chain carries N6-acetyllysine; alternate. Residue lysine 305 forms a Glycyl lysine isopeptide (Lys-Gly) (interchain with G-Cter in SUMO2); alternate linkage. Lysine 320 participates in a covalent cross-link: Glycyl lysine isopeptide (Lys-Gly) (interchain with G-Cter in SUMO2). Position 341 is an N6-acetyllysine (lysine 341). Lysine 367 is covalently cross-linked (Glycyl lysine isopeptide (Lys-Gly) (interchain with G-Cter in SUMO2)). Residues 367–371 (KLIYF) form an involved in binding PPP1CA region. The residue at position 378 (lysine 378) is an N6-acetyllysine; alternate. Residue lysine 378 forms a Glycyl lysine isopeptide (Lys-Gly) (interchain with G-Cter in SUMO2); alternate linkage. A Glycyl lysine isopeptide (Lys-Gly) (interchain with G-Cter in SUMO1); alternate cross-link involves residue lysine 378. Lysine 408 participates in a covalent cross-link: Glycyl lysine isopeptide (Lys-Gly) (interchain with G-Cter in SUMO2). Residues 412-480 (ERPGTNSTGP…SRSGEGEVSG (69 aa)) form a disordered region. Residue serine 418 is modified to Phosphoserine. Lysine 435 is covalently cross-linked (Glycyl lysine isopeptide (Lys-Gly) (interchain with G-Cter in SUMO2)). A compositionally biased stretch (polar residues) spans 435–444 (KQGSGSSQPM). Phosphoserine is present on residues serine 438, serine 440, and serine 454. Lysine 469 is covalently cross-linked (Glycyl lysine isopeptide (Lys-Gly) (interchain with G-Cter in SUMO2); alternate). Residue lysine 469 forms a Glycyl lysine isopeptide (Lys-Gly) (interchain with G-Cter in SUMO1); alternate linkage. Residue arginine 470 is modified to Citrulline. Residue serine 471 is modified to Phosphoserine. Arginine 472 is subject to Citrulline. Serine 473, serine 479, and serine 489 each carry phosphoserine. Residues 476–513 (GEVSGLLRKVPRVSLERLDLDLTSDSQPPVFKVFPGST) form an HP1 box region. A PxVxL motif motif is present at residues 481-494 (LLRKVPRVSLERLD). Threonine 498 is subject to Phosphothreonine. A Phosphoserine modification is found at serine 501. A Glycyl lysine isopeptide (Lys-Gly) (interchain with G-Cter in SUMO2) cross-link involves residue lysine 507. Residue lysine 554 forms a Glycyl lysine isopeptide (Lys-Gly) (interchain with G-Cter in SUMO2); alternate linkage. Lysine 554 participates in a covalent cross-link: Glycyl lysine isopeptide (Lys-Gly) (interchain with G-Cter in SUMO); alternate. Lysine 575 is covalently cross-linked (Glycyl lysine isopeptide (Lys-Gly) (interchain with G-Cter in SUMO2)). Residues 581 to 602 (LTEGPGAEGPRLASPSGSTSSG) are disordered. Serine 594 bears the Phosphoserine mark. A PHD-type zinc finger spans residues 625-672 (ATICRVCQKPGDLVMCNQCEFCFHLDCHLPALQDVPGEEWSCSLCHVL). Lysine 676 participates in a covalent cross-link: Glycyl lysine isopeptide (Lys-Gly) (interchain with G-Cter in SUMO). 3 positions are modified to phosphoserine: serine 683, serine 689, and serine 697. Residues 695-799 (KLSPANQRKC…RFFETRMNDA (105 aa)) form the Bromo domain. Lysine 750 participates in a covalent cross-link: Glycyl lysine isopeptide (Lys-Gly) (interchain with G-Cter in SUMO2); alternate. Lysine 750 is covalently cross-linked (Glycyl lysine isopeptide (Lys-Gly) (interchain with G-Cter in SUMO1); alternate). Lysine 750 is covalently cross-linked (Glycyl lysine isopeptide (Lys-Gly) (interchain with G-Cter in SUMO); alternate). At serine 752 the chain carries Phosphoserine. Position 755 is a phosphotyrosine (tyrosine 755). Residue serine 757 is modified to Phosphoserine. Lysine 770, lysine 774, and lysine 779 each carry N6-acetyllysine; alternate. Residues lysine 770, lysine 774, and lysine 779 each participate in a glycyl lysine isopeptide (Lys-Gly) (interchain with G-Cter in SUMO2); alternate cross-link. Residue lysine 779 forms a Glycyl lysine isopeptide (Lys-Gly) (interchain with G-Cter in SUMO1); alternate linkage. A Phosphoserine modification is found at serine 784. Lysine 804 is covalently cross-linked (Glycyl lysine isopeptide (Lys-Gly) (interchain with G-Cter in SUMO2)). A Phosphoserine; by ATM and ATR and dsDNA kinase modification is found at serine 824.

This sequence belongs to the TRIM/RBCC family. In terms of assembly, oligomer; the RBCC domain homotrimerizes and interacts with one molecule of KRAB to form the KRAB-KAP1 corepressor complex. Interacts with SETX. Binding to a KRAB domain is an absolute requirement for silencing gene expression. Interacts with a number of KRAB-ZFP proteins including ZNF10, ZFP53, ZFP68, ZNF382 and ZNF256. Interacts with NCOR1, NR3C1 and CHD3. Interacts with CEBPB (via the RING-type and PHD-type zinc fingers). Interacts with CBX5 (via the PxVxL motif); the interaction occurs in interphase nuclei and competes for binding POGZ. Interacts with POGZ; the interaction competes for interaction with CBX5. Interacts with SETDB1; the interaction is enhanced by KAP1 sumoylation, stimulates SETDB1 histone methyltransferase activity and gene silencing. Interacts (via the PHD-type zinc finger) with UBE2I; the interaction is required for sumoylation and repressor activity. Component of the TRIM28/KAP1-ERBB4-MDM2 complex involved in connecting growth factor and DNA damage responses. Interacts directly with ERBB4; the interaction represses ERBB4-mediated transcription activity. Interacts with MDM2; the interaction contributes to p53/TP53 inactivation. Component of the TRIM28/KAP1-MDM2-p53/TP53; involved in regulating p53/TP53 stabilization and activity. Interacts (via the leucine zipper alpha helical coiled-coil) with E2F1 (central region); the interaction inhibits E2F1 acetylation and transcriptional activity. Interacts with PPP1CA; the interaction dephosphorylates TRIM28 at Ser-824 and forms a complex at the p21 promoter site. Interacts with PPP1CB; the interaction is weak but is increased on dephosphorylation at Ser-824. Interacts with CEBPB and NR3C1. Interacts with CBX5 (via the PxVxL motif); the interaction occurs in interphase nuclei and competes for binding POGZ. Component of a ternary complex that includes TRIM28, a HP1 protein (CBX1, CBX3 OR CBX5), a KRAB domain-containing protein, and DNA. Interacts with SMARCAD1. Interacts with, and sumoylates IRF7. Interacts with MAGEC2. Part of a complex composed of TRIM28, HDAC1, HDAC2 and EHMT2. Interacts (via the RBCC domain) with KOX1 (via the KRAB domain), ZNF268 (via the KRAB domain) and ZNF300 (via the KRAB domain); the interactions increase KOX1, ZNF268 and ZNF300 nuclear localization activities. Interacts with AICDA. The large PER complex involved in the histone methylation is composed of at least PER2, CBX3, TRIM28, SUV39H1 and/or SUV39H2; CBX3 mediates the formation of the complex. Interacts with NR4A3; the interactions potentiates NR4A3 activity on NurRE promoter. Interacts (unphosphorylated or phosphorylated form) with ZBTB1 (via BTB domain). Probably part of a corepressor complex containing ZNF304, TRIM28, SETDB1 and DNMT1. Interacts with ATRX. Forms a complex with ATRX, SETDB1 and ZNF274. Interacts with ZFP568; the interaction mediates ZFP568 transcriptional repression activity. Interacts with RRP1B. Interacts with CRY1. Interacts with ZNF263; recruited to the SIX3 promoter along with other proteins involved in chromatin modification and transcriptional corepression where it contributes to transcriptional repression. Interacts with CYREN (via XLF motif). Interacts with TRIM17; this interaction prevents TRIM28 activity. Interacts with ZNF746. Interacts with PHF13. Interacts with ZNF354C. Interacts with ZNF432; the interaction is independent of PARP1. Post-translationally, ATM-induced phosphorylation on Ser-824 represses sumoylation leading to the de-repression of expression of a subset of genes involved in cell cycle control and apoptosis in response to genotoxic stress. Dephosphorylation by the phosphatases, PPP1CA and PP1CB forms, allows sumoylation and expression of TRIM28 target genes. Sumoylation/desumoylation events regulate TRIM28-mediated transcriptional repression. Sumoylation is required for interaction with CHD3 and SETDB1 and the corepressor activity. Represses and is repressed by Ser-824 phosphorylation. Enhances the TRIM28 corepressor activity, inhibiting transcriptional activity of a number of genes including GADD45A and CDKN1A/p21. Lys-554, Lys-779 and Lys-804 are the major sites of sumoylation. In response to Dox-induced DNA damage, enhanced phosphorylation on Ser-824 prevents sumoylation and allows de-repression of CDKN1A/p21. In terms of processing, auto-ubiquitinated; enhanced by MAGEA2 and MAGEC2. Post-translationally, citrullinated by PADI4. ADP-ribosylated by SIRT6, promoting TRIM28/KAP1 interaction with CBX5, thereby contributing to the packaging of LINE-1 retrotransposon elements into transcriptionally repressive heterochromatin.

Its subcellular location is the nucleus. It catalyses the reaction S-ubiquitinyl-[E2 ubiquitin-conjugating enzyme]-L-cysteine + [acceptor protein]-L-lysine = [E2 ubiquitin-conjugating enzyme]-L-cysteine + N(6)-ubiquitinyl-[acceptor protein]-L-lysine.. It participates in protein modification; protein sumoylation. Nuclear corepressor for KRAB domain-containing zinc finger proteins (KRAB-ZFPs). Mediates gene silencing by recruiting CHD3, a subunit of the nucleosome remodeling and deacetylation (NuRD) complex, and SETDB1 (which specifically methylates histone H3 at 'Lys-9' (H3K9me)) to the promoter regions of KRAB target genes. Enhances transcriptional repression by coordinating the increase in H3K9me, the decrease in histone H3 'Lys-9 and 'Lys-14' acetylation (H3K9ac and H3K14ac, respectively) and the disposition of HP1 proteins to silence gene expression. Recruitment of SETDB1 induces heterochromatinization. May play a role as a coactivator for CEBPB and NR3C1 in the transcriptional activation of ORM1. Also a corepressor for ERBB4. Inhibits E2F1 activity by stimulating E2F1-HDAC1 complex formation and inhibiting E2F1 acetylation. May serve as a partial backup to prevent E2F1-mediated apoptosis in the absence of RB1. Important regulator of CDKN1A/p21(CIP1). Has E3 SUMO-protein ligase activity toward itself via its PHD-type zinc finger. Specifically sumoylates IRF7, thereby inhibiting its transactivation activity. Ubiquitinates p53/TP53 leading to its proteasomal degradation; the function is enhanced by MAGEC2 and MAGEA2, and possibly MAGEA3 and MAGEA6. Mediates the nuclear localization of KOX1, ZNF268 and ZNF300 transcription factors. Probably forms a corepressor complex required for activated KRAS-mediated promoter hypermethylation and transcriptional silencing of tumor suppressor genes (TSGs) or other tumor-related genes in colorectal cancer (CRC) cells. Required to maintain a transcriptionally repressive state of genes in undifferentiated embryonic stem cells (ESCs). In ESCs, in collaboration with SETDB1, is also required for H3K9me3 and silencing of endogenous and introduced retroviruses in a DNA-methylation independent-pathway. Associates at promoter regions of tumor suppressor genes (TSGs) leading to their gene silencing. The SETDB1-TRIM28-ZNF274 complex may play a role in recruiting ATRX to the 3'-exons of zinc-finger coding genes with atypical chromatin signatures to establish or maintain/protect H3K9me3 at these transcriptionally active regions. Acts as a corepressor for ZFP568. This Mus musculus (Mouse) protein is Transcription intermediary factor 1-beta.